A 597-amino-acid polypeptide reads, in one-letter code: Elongation factor 4 (597 aa).

The 183-residue stretch at 2–184 (KNIRNFSIIA…EIVAKIPAPT (183 aa)) folds into the tr-type G domain. GTP is bound by residues 14-19 (DHGKST) and 131-134 (NKID).

This sequence belongs to the TRAFAC class translation factor GTPase superfamily. Classic translation factor GTPase family. LepA subfamily.

It localises to the cell inner membrane. It carries out the reaction GTP + H2O = GDP + phosphate + H(+). Its function is as follows. Required for accurate and efficient protein synthesis under certain stress conditions. May act as a fidelity factor of the translation reaction, by catalyzing a one-codon backward translocation of tRNAs on improperly translocated ribosomes. Back-translocation proceeds from a post-translocation (POST) complex to a pre-translocation (PRE) complex, thus giving elongation factor G a second chance to translocate the tRNAs correctly. Binds to ribosomes in a GTP-dependent manner. The protein is Elongation factor 4 of Neisseria meningitidis serogroup C / serotype 2a (strain ATCC 700532 / DSM 15464 / FAM18).